Reading from the N-terminus, the 295-residue chain is N-acetylmuramic acid 6-phosphate etherase (295 aa).

The region spanning 55–218 (AADALKQGGR…STGAMVKLGK (164 aa)) is the SIS domain. Residue glutamate 83 is the Proton donor of the active site. The active site involves glutamate 114.

The protein belongs to the GCKR-like family. MurNAc-6-P etherase subfamily. Homodimer.

It carries out the reaction N-acetyl-D-muramate 6-phosphate + H2O = N-acetyl-D-glucosamine 6-phosphate + (R)-lactate. Its pathway is amino-sugar metabolism; 1,6-anhydro-N-acetylmuramate degradation. It participates in amino-sugar metabolism; N-acetylmuramate degradation. It functions in the pathway cell wall biogenesis; peptidoglycan recycling. Its function is as follows. Specifically catalyzes the cleavage of the D-lactyl ether substituent of MurNAc 6-phosphate, producing GlcNAc 6-phosphate and D-lactate. Together with AnmK, is also required for the utilization of anhydro-N-acetylmuramic acid (anhMurNAc) either imported from the medium or derived from its own cell wall murein, and thus plays a role in cell wall recycling. In Yersinia pseudotuberculosis serotype O:1b (strain IP 31758), this protein is N-acetylmuramic acid 6-phosphate etherase.